The chain runs to 198 residues: MFHLVKGLYNNWNKKEQYSILILGLDNAGKTTFLETLKKEYSLAFKALEKIQPTVGQNVATIPVDSKQILKFWDVGGQESLRSMWSEYYSLCHGIIFIVDSSDRERLDECSTTLQSVVMDEEIEGVPILMLANKQDRQDRMEVQDIKEVFNKIAEHISARDSRVLPISALTGEGVKDAIEWMIVRLERNKKSRPPIYK.

Met-1 is modified (N-acetylmethionine). Position 24–31 (24–31 (GLDNAGKT)) interacts with GTP. Residue Lys-50 forms a Glycyl lysine isopeptide (Lys-Gly) (interchain with G-Cter in ubiquitin) linkage. GTP contacts are provided by residues 74–78 (DVGGQ) and 133–136 (NKQD).

Belongs to the small GTPase superfamily. Arf family. In terms of assembly, interacts with SYS1 and SLO1.

Its subcellular location is the golgi apparatus. Involved in the targeting of ARL1 to the Golgi. Can bind and hydrolyze GTP. The chain is ADP-ribosylation factor-like protein 3 (ARL3) from Saccharomyces cerevisiae (strain ATCC 204508 / S288c) (Baker's yeast).